Consider the following 869-residue polypeptide: NACHT, LRR and PYD domains-containing protein 6 (869 aa).

Residues 37-128 (KLRDAPLDGR…REHVLRQHAK (92 aa)) enclose the Pyrin domain. Residues 194-511 (LTVVLQGPAG…EFLAALSYLL (318 aa)) form the NACHT domain. 200-207 (GPAGIGKT) contributes to the ATP binding site. Residues 350-354 (KDKKK) form a disordered region. The LRR 1 repeat unit spans residues 460–485 (EEDLEKLKLRGSQVQTIFLNKKEIPG). The tract at residues 577-608 (VQGQSHPKGPPVGAKKTAELEDIEDAEEEEEE) is disordered. Residues 596-608 (LEDIEDAEEEEEE) show a composition bias toward acidic residues. LRR repeat units lie at residues 635-658 (LSSL…VLNY) and 837-860 (TLSL…KTSK).

This sequence belongs to the NLRP family. Homomultimer; forms the NLRP6 inflammasome polymeric complex, a filament composed of homopolymers in response to pathogens and other damage-associated signals. The core of NLRP6 inflammasomes consists of a signal sensor component (NLRP6), an adapter (PYCARD/ASC), which recruits effector pro-inflammatory caspases (CASP1 and CASP4). Interacts (via pyrin domain) with PYCARD/ASC (via pyrin domain); interaction takes place following NLRP6 activation and formation of liquid-liquid phase separation (LLPS), initiating nucleation which greatly enhances further addition of soluble PYCARD/ASC molecules to the speck in a prion-like polymerization process. Clustered PYCARD/ASC nucleates the formation of CASP1 (or possibly CASP4) filaments through the interaction of their respective CARD domains, acting as a platform for CASP1 polymerization. CASP1 filament formation increases local enzyme concentration, resulting in trans-autocleavage and activation. Active CASP1 then processes IL1B and IL18 precursors, leading to the release of mature cytokines in the extracellular milieu and inflammatory response. Interacts with DHX15. Post-translationally, polyubiquitinated with 'Lys-63'-linked chains, promoting the interaction with PYCARD/ASC and formation of the NLRP6 inflammasome. Deubiquitination by CYLD decreases the interaction with PYCARD/ASC. Highly expressed in the gastrointestinal tract, predominantly in colonic myofibroblasts and in colonic epithelial and endothelial cells. Within the intestinal mucosa, highly expressed by goblet cells. Also expressed in hepatocytes and in immune cells, including CD4(+) and CD8(+) T-cells, dendritic cells, mastocytes and peritoneal macrophages, as well as in lung, kidney, bladder and gonads.

The protein resides in the cytoplasm. It is found in the inflammasome. It localises to the cell membrane. The protein localises to the nucleus membrane. Acts as the sensor component of the NLRP6 inflammasome, which mediates inflammasome activation in response to various pathogen-associated signals, leading to maturation and secretion of IL1B and IL18. Inflammasomes are supramolecular complexes that assemble in the cytosol in response to pathogens and other damage-associated signals and play critical roles in innate immunity and inflammation. Acts as a recognition receptor (PRR): recognizes and binds specific pathogens and other damage-associated signals, such as lipoteichoic acid (LTA), a cell-wall component of Gram-positive bacteria, or double stranded RNA (dsRNA). May also recognize and bind lipopolysaccharide (LPS), a major component of the outer membrane of Gram-negative bacteria; however, LPS is probably not a major activator of the NLRP6 inflammasome. Following LTA- or dsRNA-binding, NLRP6 undergoes liquid-liquid phase separation (LLPS), enhancing multivalent interactions, an essential step for the formation of the NLRP6 inflammasome polymeric complex. The NLRP6 inflammasome acts by promoting recruitment of effector pro-inflammatory caspases (CASP1 and/or CASP4) that catalyze maturation and secretion of IL1B and IL18 in the extracellular milieu. The NLRP6 inflammasome plays a central role in the maintenance of epithelial integrity and host defense against microbial infections in the intestine. Required to restrict infection against Gram-positive bacteria by recognizing lipoteichoic acid (LTA), leading to recruitment of CASP4 and CASP1, and subsequent maturation and secretion of IL1B and IL18. Involved in intestinal antiviral innate immunity together with DHX15: recognizes and binds viral dsRNA to restrict infection by enteric viruses through the interferon pathway and GSDMD-dependent release of IL18. Required to prevent infection by the apicomplexan parasite C.tyzzeri in enterocytes by promoting GSDMD-dependent release of IL18. The NLRP6 inflammasome may also regulate the gut microbiota composition by acting as a sensor of microbiota-associated metabolites to form a PYCARD/ASC-dependent inflammasome for downstream IL18 release and secretion of antimicrobial peptides. Its role in the regulation of the gut microbiota composition is however subject to discussion. Essential for gut mucosal self-renewal and proliferation. Regulate mucus secretion in an inflammasome- and autophagy-dependent manner to prevent invasion by enteric bacteria. During systemic bacterial infections, the NLRP6 inflammasome negatively regulates neutrophil recruitment and neutrophil extracellular traps (NETs) formation. May promote peripheral nerve recovery following injury via an inflammasome-independent mechanism. The protein is NACHT, LRR and PYD domains-containing protein 6 of Mus musculus (Mouse).